The chain runs to 424 residues: Adenylosuccinate synthetase (424 aa).

GTP-binding positions include 12 to 18 and 40 to 42; these read GDEGKGK and GHT. Asp-13 serves as the catalytic Proton acceptor. Asp-13 and Gly-40 together coordinate Mg(2+). IMP contacts are provided by residues 13–16, 38–41, Thr-130, Arg-144, Asn-220, Thr-235, and Arg-299; these read DEGK and NAGH. His-41 acts as the Proton donor in catalysis. 295 to 301 contacts substrate; sequence VTTGRRR. Residues Arg-301, 327-329, and 412-414 each bind GTP; these read KLD and GTG.

Belongs to the adenylosuccinate synthetase family. As to quaternary structure, homodimer. It depends on Mg(2+) as a cofactor.

It is found in the cytoplasm. It catalyses the reaction IMP + L-aspartate + GTP = N(6)-(1,2-dicarboxyethyl)-AMP + GDP + phosphate + 2 H(+). It participates in purine metabolism; AMP biosynthesis via de novo pathway; AMP from IMP: step 1/2. Plays an important role in the de novo pathway and in the salvage pathway of purine nucleotide biosynthesis. Catalyzes the first committed step in the biosynthesis of AMP from IMP. This is Adenylosuccinate synthetase from Aspergillus niger (strain ATCC MYA-4892 / CBS 513.88 / FGSC A1513).